The chain runs to 130 residues: Small ribosomal subunit protein uS9 (130 aa).

The segment at 98–130 is disordered; that stretch reads LKRAGMLTRDPRMKERKKPGLKGARRSPQFSKR. Basic residues predominate over residues 111-130; that stretch reads KERKKPGLKGARRSPQFSKR.

This sequence belongs to the universal ribosomal protein uS9 family.

The protein is Small ribosomal subunit protein uS9 of Macrococcus caseolyticus (strain JCSC5402) (Macrococcoides caseolyticum).